The primary structure comprises 811 residues: U-box domain-containing protein 43 (811 aa).

One can recognise a U-box domain in the interval 24–103 (NIYEAFICPL…EEWRARNDAL (80 aa)). 9 ARM repeats span residues 136 to 175 (RKIRQRVCNPQLVRLITDMLKSSSHEVRCKALQTLQVVVE), 178 to 217 (EESKAIVAEGDTVRTIVKFLSQEPSKGREAAVSVLFELSK), 220 to 261 (ALCE…NLER), 263 to 302 (EENVRQMAINGRLQPLLAKLLEGSPETKVSMAFYLGVLAL), 303 to 342 (NNDVKVIVAQTVGSSLIDLMRTRDMSQREAALGALNNISS), 344 to 388 (EGSA…NIVN), 399 to 438 (GPHHQTLVSEEIVENLLQLTSNTGPEIQGKLLAVLVGLTS), 444 to 484 (INVV…NISP), and 489 to 528 (ELANALRSTVGQLGSLVSIISENTPTITEEQAAAAGLLAE).

The catalysed reaction is S-ubiquitinyl-[E2 ubiquitin-conjugating enzyme]-L-cysteine + [acceptor protein]-L-lysine = [E2 ubiquitin-conjugating enzyme]-L-cysteine + N(6)-ubiquitinyl-[acceptor protein]-L-lysine.. It functions in the pathway protein modification; protein ubiquitination. Its function is as follows. Functions as an E3 ubiquitin ligase. The protein is U-box domain-containing protein 43 (PUB43) of Arabidopsis thaliana (Mouse-ear cress).